The chain runs to 443 residues: ATP-dependent protease ATPase subunit HslU (443 aa).

Residues isoleucine 18, 60 to 65 (GVGKTE), aspartate 256, glutamate 321, and arginine 393 each bind ATP.

Belongs to the ClpX chaperone family. HslU subfamily. In terms of assembly, a double ring-shaped homohexamer of HslV is capped on each side by a ring-shaped HslU homohexamer. The assembly of the HslU/HslV complex is dependent on binding of ATP.

It is found in the cytoplasm. Functionally, ATPase subunit of a proteasome-like degradation complex; this subunit has chaperone activity. The binding of ATP and its subsequent hydrolysis by HslU are essential for unfolding of protein substrates subsequently hydrolyzed by HslV. HslU recognizes the N-terminal part of its protein substrates and unfolds these before they are guided to HslV for hydrolysis. The chain is ATP-dependent protease ATPase subunit HslU from Escherichia fergusonii (strain ATCC 35469 / DSM 13698 / CCUG 18766 / IAM 14443 / JCM 21226 / LMG 7866 / NBRC 102419 / NCTC 12128 / CDC 0568-73).